Here is a 148-residue protein sequence, read N- to C-terminus: Large ribosomal subunit protein uL15 (148 aa).

Residues 14–54 (HRKKRVGCGEGGGHGKTSGRGGKGQTARSGSSIRPGFEGGQ) are disordered. The span at 21-37 (CGEGGGHGKTSGRGGKG) shows a compositional bias: gly residues.

It belongs to the universal ribosomal protein uL15 family. In terms of assembly, part of the 50S ribosomal subunit.

Binds to the 23S rRNA. In Opitutus terrae (strain DSM 11246 / JCM 15787 / PB90-1), this protein is Large ribosomal subunit protein uL15.